The sequence spans 427 residues: Flotillin-1 (427 aa).

Residues serine 19, serine 163, and serine 385 each carry the phosphoserine modification. At threonine 387 the chain carries Phosphothreonine.

Belongs to the band 7/mec-2 family. Flotillin subfamily. In terms of assembly, heterooligomeric complex of flotillin-1 and flotillin-2 and caveolin-1 and caveolin-2. Interacts with ECPAS.

Its subcellular location is the cell membrane. The protein localises to the endosome. It is found in the membrane. The protein resides in the caveola. It localises to the melanosome. Its subcellular location is the membrane raft. Functionally, may act as a scaffolding protein within caveolar membranes, functionally participating in formation of caveolae or caveolae-like vesicles. The polypeptide is Flotillin-1 (FLOT1) (Homo sapiens (Human)).